The primary structure comprises 884 residues: Translation initiation factor IF-2 (884 aa).

The interval 93–288 is disordered; that stretch reads VNTPEAEQAK…KGKRKPSTLQ (196 aa). A compositionally biased stretch (basic and acidic residues) spans 99–209; that stretch reads EQAKAEEQAQ…KMAAENEGKW (111 aa). Over residues 216-229 the composition is skewed to polar residues; that stretch reads QTESADYHVTTSQH. The segment covering 231 to 246 has biased composition (basic and acidic residues); it reads RAAEDENDAKVEGDRR. The span at 247-261 shows a compositional bias: basic residues; it reads SRTRGGKATKQKKGN. Residues 262–275 show a composition bias toward basic and acidic residues; it reads KLSESKADREEARA. In terms of domain architecture, tr-type G spans 383–552; sequence HRAPVVTIMG…LLQAEVLELK (170 aa). A G1 region spans residues 392 to 399; it reads GHVDHGKT. Residue 392 to 399 coordinates GTP; the sequence is GHVDHGKT. A G2 region spans residues 417–421; it reads GITQH. Positions 438 to 441 are G3; sequence DTPG. GTP contacts are provided by residues 438–442 and 492–495; these read DTPGH and NKID. The interval 492 to 495 is G4; that stretch reads NKID. The interval 528–530 is G5; that stretch reads SAK.

It belongs to the TRAFAC class translation factor GTPase superfamily. Classic translation factor GTPase family. IF-2 subfamily.

It is found in the cytoplasm. Functionally, one of the essential components for the initiation of protein synthesis. Protects formylmethionyl-tRNA from spontaneous hydrolysis and promotes its binding to the 30S ribosomal subunits. Also involved in the hydrolysis of GTP during the formation of the 70S ribosomal complex. The polypeptide is Translation initiation factor IF-2 (Yersinia pestis bv. Antiqua (strain Angola)).